We begin with the raw amino-acid sequence, 525 residues long: GMP synthase [glutamine-hydrolyzing] (525 aa).

The region spanning 8–207 is the Glutamine amidotransferase type-1 domain; sequence KILILDFGSQ…ALDICQCEAN (200 aa). Residue Cys85 is the Nucleophile of the active site. Residues His181 and Glu183 contribute to the active site. The region spanning 208–400 is the GMPS ATP-PPase domain; that stretch reads WKPSSIIEDA…LGLPYNMLYR (193 aa). 235–241 serves as a coordination point for ATP; it reads SGGVDSS.

As to quaternary structure, homodimer.

The enzyme catalyses XMP + L-glutamine + ATP + H2O = GMP + L-glutamate + AMP + diphosphate + 2 H(+). It functions in the pathway purine metabolism; GMP biosynthesis; GMP from XMP (L-Gln route): step 1/1. In terms of biological role, catalyzes the synthesis of GMP from XMP. The chain is GMP synthase [glutamine-hydrolyzing] from Shewanella loihica (strain ATCC BAA-1088 / PV-4).